A 154-amino-acid polypeptide reads, in one-letter code: MTESERALLTFEQLFDTSRAIYKKQKKILEIVLEPFDITVLQYLLMFKIHQSGSTPLSKLAMSLDLKPASVTRMTDILYKRQLMNRYDSPDDRRIVMIQLTEEGEELIEKAAVQYAKMGAGLYQKLDTSQLQYLRKLAGSLTKLAEGCSEKSGN.

Residues 1–143 form the HTH marR-type domain; that stretch reads MTESERALLT…LRKLAGSLTK (143 aa). A DNA-binding region (H-T-H motif) is located at residues 57–80; the sequence is LSKLAMSLDLKPASVTRMTDILYK.

This is an uncharacterized protein from Bacillus subtilis (strain 168).